Reading from the N-terminus, the 497-residue chain is ADP-dependent glucokinase (497 aa).

An N-terminal signal peptide occupies residues 1 to 22; it reads MALWRGSAYAGFLALAVGCVFL. Positions 52-497 constitute an ADPK domain; sequence SPEGRLAAAW…LFYSEVHPHL (446 aa). Mg(2+) contacts are provided by Glu297, Glu328, and Asp481. The active-site Proton acceptor is Asp481.

It belongs to the ADP-dependent glucokinase family. In terms of assembly, monomer. The cofactor is Mg(2+).

The protein resides in the secreted. The catalysed reaction is D-glucose + ADP = D-glucose 6-phosphate + AMP + H(+). Its pathway is carbohydrate degradation; glycolysis. In terms of biological role, catalyzes the phosphorylation of D-glucose to D-glucose 6-phosphate using ADP as the phosphate donor. GDP and CDP can replace ADP, but with reduced efficiency. The protein is ADP-dependent glucokinase (ADPGK) of Bos taurus (Bovine).